The chain runs to 101 residues: MTSKLAVALLAAFLLSAALCEAAVLSRMSTELRCQCIKTHSTPFHPKFIKELRVIESGPHCENSEIIVKLTNGNEVCLNPKEKWVQKVVQVFVKRAEKQDP.

A signal peptide spans 1-22 (MTSKLAVALLAAFLLSAALCEA). 2 disulfide bridges follow: Cys34/Cys61 and Cys36/Cys77.

The protein belongs to the intercrine alpha (chemokine CxC) family. As to quaternary structure, homodimer. Interacts with TNFAIP6 (via Link domain); this interaction interferes with chemokine binding to glycosaminoglycans.

It is found in the secreted. Chemotactic factor that mediates inflammatory response by attracting neutrophils, basophils, and T-cells to clear pathogens and protect the host from infection. Also plays an important role in neutrophil activation. Released in response to an inflammatory stimulus, exerts its effect by binding to the G-protein-coupled receptors CXCR1 and CXCR2, primarily found in neutrophils, monocytes and endothelial cells. G-protein heterotrimer (alpha, beta, gamma subunits) constitutively binds to CXCR1/CXCR2 receptor and activation by IL8 leads to beta and gamma subunits release from Galpha (GNAI2 in neutrophils) and activation of several downstream signaling pathways including PI3K and MAPK pathways. The chain is Interleukin-8 (CXCL8) from Bos taurus (Bovine).